A 236-amino-acid chain; its full sequence is Orotidine 5'-phosphate decarboxylase (236 aa).

Substrate is bound by residues Asp-17, Lys-39, 66 to 75, Thr-125, Arg-186, Gln-195, Gly-215, and Arg-216; that span reads DLKFHDIPNT. The active-site Proton donor is the Lys-68.

Belongs to the OMP decarboxylase family. Type 1 subfamily. In terms of assembly, homodimer.

The catalysed reaction is orotidine 5'-phosphate + H(+) = UMP + CO2. The protein operates within pyrimidine metabolism; UMP biosynthesis via de novo pathway; UMP from orotate: step 2/2. Its function is as follows. Catalyzes the decarboxylation of orotidine 5'-monophosphate (OMP) to uridine 5'-monophosphate (UMP). The protein is Orotidine 5'-phosphate decarboxylase of Buchnera aphidicola subsp. Acyrthosiphon pisum (strain APS) (Acyrthosiphon pisum symbiotic bacterium).